Consider the following 490-residue polypeptide: Katanin p60 ATPase-containing subunit A-like 1 (490 aa).

Position 1 is an N-acetylmethionine (methionine 1). Residues 95-178 (DPAVWPPPVP…MQDGASDGDI (84 aa)) form a disordered region. Residues 116-127 (PNREVRPLRKDV) show a composition bias toward basic and acidic residues. Residues 128–139 (AGVGARGPVGRA) are compositionally biased toward low complexity. Residues 143 to 169 (SKSEKPSTNKDKDYRARGRDDKGRKNM) show a composition bias toward basic and acidic residues. Serine 174 bears the Phosphoserine mark. 248 to 255 (GPPGTGKT) is a binding site for ATP.

It belongs to the AAA ATPase family. Katanin p60 subunit A1 subfamily. A-like 1 sub-subfamily. Interacts with KATNB1 and KATNBL1.

It localises to the cytoplasm. Its subcellular location is the cytoskeleton. The protein resides in the spindle pole. It is found in the spindle. It catalyses the reaction n ATP + n H2O + a microtubule = n ADP + n phosphate + (n+1) alpha/beta tubulin heterodimers.. Regulates microtubule dynamics in Sertoli cells, a process that is essential for spermiogenesis and male fertility. Severs microtubules in an ATP-dependent manner, promoting rapid reorganization of cellular microtubule arrays. Has microtubule-severing activity in vitro. The polypeptide is Katanin p60 ATPase-containing subunit A-like 1 (Sorex araneus (Eurasian common shrew)).